A 732-amino-acid chain; its full sequence is Catalase-peroxidase (732 aa).

A disordered region spans residues 1–21 (MSMAEMRCPFSGHGAATTPAS). The signal sequence occupies residues 1 to 22 (MSMAEMRCPFSGHGAATTPASA). The tryptophyl-tyrosyl-methioninium (Trp-Tyr) (with M-246) cross-link spans 97-220 (WHSAGTYRLA…LAATEMGLIY (124 aa)). The active-site Proton acceptor is H98. The segment at residues 220-246 (YVNPEGPHGEPDPVASGREVRDTFARM) is a cross-link (tryptophyl-tyrosyl-methioninium (Tyr-Met) (with W-97)). H261 provides a ligand contact to heme b.

This sequence belongs to the peroxidase family. Peroxidase/catalase subfamily. In terms of assembly, homodimer or homotetramer. Requires heme b as cofactor. Post-translationally, formation of the three residue Trp-Tyr-Met cross-link is important for the catalase, but not the peroxidase activity of the enzyme.

It catalyses the reaction H2O2 + AH2 = A + 2 H2O. The enzyme catalyses 2 H2O2 = O2 + 2 H2O. Functionally, bifunctional enzyme with both catalase and broad-spectrum peroxidase activity. The chain is Catalase-peroxidase from Synechococcus sp. (strain RCC307).